The following is a 110-amino-acid chain: Large ribosomal subunit protein P2B (110 aa).

A Phosphoserine modification is found at Ser-29. Residue Lys-49 forms a Glycyl lysine isopeptide (Lys-Gly) (interchain with G-Cter in ubiquitin) linkage. The segment at 66 to 110 (VPTGGASSAAAGAAGAAAGGDAAEEEKEEEAKEESDDDMGFGLFD) is disordered. Residues 69 to 86 (GGASSAAAGAAGAAAGGD) show a composition bias toward low complexity. Residues 87 to 104 (AAEEEKEEEAKEESDDDM) are compositionally biased toward acidic residues. Phosphoserine is present on Ser-100.

The protein belongs to the eukaryotic ribosomal protein P1/P2 family. As to quaternary structure, component of the large ribosomal subunit (LSU). Mature yeast ribosomes consist of a small (40S) and a large (60S) subunit. The 40S small subunit contains 1 molecule of ribosomal RNA (18S rRNA) and 33 different proteins (encoded by 57 genes). The large 60S subunit contains 3 rRNA molecules (25S, 5.8S and 5S rRNA) and 46 different proteins (encoded by 81 genes). The 5 acidic ribosomal P-proteins form the stalk structure of the 60S subunit. They are organized as a pentameric complex in which uL10/P0 interacts with 2 heterodimers, P1A-P2B and P1B-P2A. In terms of processing, the N-terminus is not modified.

Its subcellular location is the cytoplasm. Its function is as follows. Component of the ribosome, a large ribonucleoprotein complex responsible for the synthesis of proteins in the cell. The small ribosomal subunit (SSU) binds messenger RNAs (mRNAs) and translates the encoded message by selecting cognate aminoacyl-transfer RNA (tRNA) molecules. The large subunit (LSU) contains the ribosomal catalytic site termed the peptidyl transferase center (PTC), which catalyzes the formation of peptide bonds, thereby polymerizing the amino acids delivered by tRNAs into a polypeptide chain. The nascent polypeptides leave the ribosome through a tunnel in the LSU and interact with protein factors that function in enzymatic processing, targeting, and the membrane insertion of nascent chains at the exit of the ribosomal tunnel. The polypeptide is Large ribosomal subunit protein P2B (Saccharomyces cerevisiae (strain ATCC 204508 / S288c) (Baker's yeast)).